The chain runs to 737 residues: O-GlcNAcase BT_4395 (737 aa).

Positions Met1–Ala21 are cleaved as a signal peptide. Positions Val148–Pro433 are catalytic domain. Positions Arg149–Ala416 constitute a GH84 domain. A protein is bound by residues Gly156, Lys187, and Asp263. Catalysis depends on Asp264, which acts as the Proton donor. A protein-binding positions include Tyr303, Trp358–Asn360, Asp365, and Asn393.

The protein belongs to the glycosyl hydrolase 84 family. As to quaternary structure, homodimer.

It catalyses the reaction 3-O-(N-acetyl-beta-D-glucosaminyl)-L-seryl-[protein] + H2O = N-acetyl-D-glucosamine + L-seryl-[protein]. The enzyme catalyses 3-O-(N-acetyl-beta-D-glucosaminyl)-L-threonyl-[protein] + H2O = L-threonyl-[protein] + N-acetyl-D-glucosamine. With respect to regulation, inhibited by 1,2-dideoxy-2'-methyl-alpha-D-glucopyranoso-[2,1-d]-delta 2'-thiazoline (NAG-thiazoline) and O-(2-acetamido-2-deoxy-D-glucopyranosylidene)amino-N-phenyl-carbamate (PUGNAc). Not inhibited by Streptozotocin. Its function is as follows. Can hydrolyze the glycosidic link of O-GlcNAcylated proteins. Can use p-nitrophenyl-beta-GlcNAc and 4-methylumbelliferone-GlcNAc as substrates (in vitro). The chain is O-GlcNAcase BT_4395 from Bacteroides thetaiotaomicron (strain ATCC 29148 / DSM 2079 / JCM 5827 / CCUG 10774 / NCTC 10582 / VPI-5482 / E50).